Here is a 420-residue protein sequence, read N- to C-terminus: Gamma-glutamyl phosphate reductase (420 aa).

The protein belongs to the gamma-glutamyl phosphate reductase family.

The protein localises to the cytoplasm. The enzyme catalyses L-glutamate 5-semialdehyde + phosphate + NADP(+) = L-glutamyl 5-phosphate + NADPH + H(+). The protein operates within amino-acid biosynthesis; L-proline biosynthesis; L-glutamate 5-semialdehyde from L-glutamate: step 2/2. In terms of biological role, catalyzes the NADPH-dependent reduction of L-glutamate 5-phosphate into L-glutamate 5-semialdehyde and phosphate. The product spontaneously undergoes cyclization to form 1-pyrroline-5-carboxylate. This chain is Gamma-glutamyl phosphate reductase, found in Pasteurella multocida (strain Pm70).